Consider the following 520-residue polypeptide: Beta-galactoside-specific lectin 4 (520 aa).

N-linked (GlcNAc...) asparagine glycosylation occurs at Asn107. The active site involves Glu159. A disulfide bond links Cys240 and Cys266. A propeptide spans 241-265 (GERPSSSDVRYWPLVIRPVIADDVT) (connecting peptide). The Ricin B-type lectin 1 domain occupies 269-396 (SEPTVRIVGR…YTLGQGWLAG (128 aa)). D-galactose is bound at residue 284–286 (DVR). N-linked (GlcNAc...) asparagine glycosylation is present at Asn322. A disulfide bridge links Cys325 with Cys342. N-linked (GlcNAc...) asparagine glycosylation is found at Asn357 and Asn397. Residues 400–520 (APREVTIYGF…KPNQMWLPVP (121 aa)) form the Ricin B-type lectin 2 domain. Disulfide bonds link Cys413–Cys426 and Cys451–Cys467. 494-496 (DVA) provides a ligand contact to D-galactose.

The protein belongs to the ribosome-inactivating protein family. Type 2 RIP subfamily. As to quaternary structure, disulfide-linked dimer of A and B chains.

It catalyses the reaction Endohydrolysis of the N-glycosidic bond at one specific adenosine on the 28S rRNA.. Its function is as follows. The A chain is responsible for inhibiting protein synthesis through the catalytic inactivation of 60S ribosomal subunits by removing adenine from position 4,324 of 28S rRNA. The B chain binds to cell receptors and probably facilitates the entry into the cell of the A chain; B chains are also responsible for cell agglutination (lectin activity). Inhibits growth of the human tumor cell line Molt4. This chain is Beta-galactoside-specific lectin 4, found in Viscum album (European mistletoe).